A 222-amino-acid chain; its full sequence is Endonuclease V (222 aa).

Mg(2+) contacts are provided by Asp43 and Asp109.

This sequence belongs to the endonuclease V family. Mg(2+) is required as a cofactor.

It is found in the cytoplasm. It carries out the reaction Endonucleolytic cleavage at apurinic or apyrimidinic sites to products with a 5'-phosphate.. In terms of biological role, DNA repair enzyme involved in the repair of deaminated bases. Selectively cleaves double-stranded DNA at the second phosphodiester bond 3' to a deoxyinosine leaving behind the intact lesion on the nicked DNA. The chain is Endonuclease V from Roseiflexus sp. (strain RS-1).